We begin with the raw amino-acid sequence, 550 residues long: Arginine--tRNA ligase (550 aa).

A 'HIGH' region motif is present at residues 130–140 (ANPTGPIHLGG).

It belongs to the class-I aminoacyl-tRNA synthetase family. In terms of assembly, monomer.

Its subcellular location is the cytoplasm. The catalysed reaction is tRNA(Arg) + L-arginine + ATP = L-arginyl-tRNA(Arg) + AMP + diphosphate. The sequence is that of Arginine--tRNA ligase from Rhodococcus opacus (strain B4).